A 144-amino-acid polypeptide reads, in one-letter code: Maximins 1/H1 (144 aa).

The signal sequence occupies residues 1–18; sequence MNFKYIVAVSFLLASAYA. Residues 19-43 constitute a propeptide that is removed on maturation; the sequence is RSEENDEQSLSQRDVLEEESLREIR. Asn70 carries the asparagine amide modification. Positions 74 to 123 are excised as a propeptide; sequence TAEEHEVMKRLEAVMRDLDSLDYPEEAAERETRSFNQEEIANLFTKKEKR. The residue at position 143 (Leu143) is a Leucine amide.

This sequence belongs to the bombinin family. In terms of tissue distribution, expressed by the skin glands.

Its subcellular location is the secreted. Antibacterial peptide with amphipathic alpha-helical structure that has activity against both Gram-positive and Gram-negative bacteria. Also shows antimicrobial activity against the fungus C.albicans, but not against A.flavus nor P.uticale. It has little hemolytic activity. It possess a significant cytotoxicity against tumor cell lines, but does not possess a significant anti-HIV activity. Also shows high spermicidal activity. Its function is as follows. antibacterial peptide with activity against both Gram-positive and Gram-negative bacteria. Also shows antimicrobial activity against the fungus C.albicans. In addition, shows strong hemolytic activity. This chain is Maximins 1/H1, found in Bombina maxima (Giant fire-bellied toad).